The following is a 180-amino-acid chain: Regulator of G-protein signaling 8 (180 aa).

Phosphoserine is present on Ser26. The 116-residue stretch at 56 to 171 (SFDVLLSHKY…FLRSKMYLDL (116 aa)) folds into the RGS domain.

In terms of assembly, interacts with GNAO1 and GNAI3.

The protein resides in the cell membrane. Its subcellular location is the membrane. It localises to the perikaryon. It is found in the cell projection. The protein localises to the dendrite. The protein resides in the nucleus. Functionally, regulates G protein-coupled receptor signaling cascades, including signaling via muscarinic acetylcholine receptor CHRM2 and dopamine receptor DRD2. Inhibits signal transduction by increasing the GTPase activity of G protein alpha subunits, thereby driving them into their inactive GDP-bound form. Modulates the activity of potassium channels that are activated in response to DRD2 and CHRM2 signaling. The polypeptide is Regulator of G-protein signaling 8 (Rgs8) (Mus musculus (Mouse)).